A 743-amino-acid chain; its full sequence is MSFSNREQGHAKERLLPTAKDIDALVRAEHHDPFSILGPHGDGAGGQFIRAYLPGALSVSVVDKNSGEELGPLEATETPGLFVGHFEGSRPYLLRTRWAGGEQVAEDPYSFGQLLGEMDLYLFAEGNHRDLSSCLGAQLKTVDGVDGVRFAVWAPNARRVSVVGDFNVWDGRRHPMRLRHPSGVWELFIPRLQAGELYKYEILGAHGILPLKADPMALATSLPPDTASKVASPLQIDWQDQDWMSGRRERQQHNAPLSIYELHAGSWQCELDDLGEVARQYTWPELAERLIPYVKELGFTHIELMPIMEHPFGGSWGYQLLSQFAPSARYGTPEQFGEFVNACHQAGIGVILDWVPAHFPTDTHGLAQFDGTALYEYGNPLEGFHQDWDTLIYNLGRTEVHGYMLASALHWLKHFHIDGLRVDAVASMLYRDYSRKAGEWVPNRHGGRENLEAIDFLRHLNDVVALEAPGALVIAEESTAWPGVSQSTQQGGLGFAYKWNMGWMHDSLHYIQQDPVYRAHHHNELSFGLVYAWSERFILPISHDEVVHGKHSLIDKMPGDRWQKFANLRAYLSFMWTHPGKKLLFMGCEFGQWREWNHDQQLDWYLLQYSEHKGVQKLVSDLNRLYREEPALHEQDDAPQGFQWLIGDDAINSVYAWLRWSKDGTPVLVVANFTPVPRQSYRVGVPFAGRWKELLNSDADTYAGSNYGNGGGAFTEEVASHGQALSLELNLPPLAVLILKPEV.

The Nucleophile role is filled by Asp-423. Residue Glu-476 is the Proton donor of the active site.

It belongs to the glycosyl hydrolase 13 family. GlgB subfamily. In terms of assembly, monomer.

It catalyses the reaction Transfers a segment of a (1-&gt;4)-alpha-D-glucan chain to a primary hydroxy group in a similar glucan chain.. It functions in the pathway glycan biosynthesis; glycogen biosynthesis. Functionally, catalyzes the formation of the alpha-1,6-glucosidic linkages in glycogen by scission of a 1,4-alpha-linked oligosaccharide from growing alpha-1,4-glucan chains and the subsequent attachment of the oligosaccharide to the alpha-1,6 position. This Pseudomonas fluorescens (strain Pf0-1) protein is 1,4-alpha-glucan branching enzyme GlgB.